The chain runs to 162 residues: Large ribosomal subunit protein uL30 (162 aa).

It belongs to the universal ribosomal protein uL30 family. As to quaternary structure, part of the 50S ribosomal subunit.

This chain is Large ribosomal subunit protein uL30, found in Korarchaeum cryptofilum (strain OPF8).